Here is a 199-residue protein sequence, read N- to C-terminus: Holliday junction branch migration complex subunit RuvA (199 aa).

A domain I region spans residues 1–63; the sequence is MIASVRGEVL…EDSMTLYGFT (63 aa). Residues 64-142 are domain II; it reads DAETRDLFLT…AAGAAGAPAG (79 aa). The tract at residues 143–153 is flexible linker; that stretch reads AARNGHAVRGP. The tract at residues 153–199 is domain III; the sequence is PVVEALVGLGFAAKQAEEATDKVLAAEPEAGTSGALRAALSLLGKSR.

This sequence belongs to the RuvA family. As to quaternary structure, homotetramer. Forms an RuvA(8)-RuvB(12)-Holliday junction (HJ) complex. HJ DNA is sandwiched between 2 RuvA tetramers; dsDNA enters through RuvA and exits via RuvB. An RuvB hexamer assembles on each DNA strand where it exits the tetramer. Each RuvB hexamer is contacted by two RuvA subunits (via domain III) on 2 adjacent RuvB subunits; this complex drives branch migration. In the full resolvosome a probable DNA-RuvA(4)-RuvB(12)-RuvC(2) complex forms which resolves the HJ.

It localises to the cytoplasm. In terms of biological role, the RuvA-RuvB-RuvC complex processes Holliday junction (HJ) DNA during genetic recombination and DNA repair, while the RuvA-RuvB complex plays an important role in the rescue of blocked DNA replication forks via replication fork reversal (RFR). RuvA specifically binds to HJ cruciform DNA, conferring on it an open structure. The RuvB hexamer acts as an ATP-dependent pump, pulling dsDNA into and through the RuvAB complex. HJ branch migration allows RuvC to scan DNA until it finds its consensus sequence, where it cleaves and resolves the cruciform DNA. This chain is Holliday junction branch migration complex subunit RuvA, found in Mycobacterium avium (strain 104).